The primary structure comprises 313 residues: uncharacterized protein (313 aa).

The segment at 1-313 (MSRNGRNDYD…SSSRSGSSRR (313 aa)) is disordered. 4 stretches are compositionally biased toward basic and acidic residues: residues 24–33 (LARDRERDSE), 40–85 (TGER…DVKY), 95–116 (TTRE…DELG), and 156–181 (TDER…DEFG). Over residues 194-205 (RGRRSNSRRRSS) the composition is skewed to basic residues. Composition is skewed to low complexity over residues 206 to 266 (NARS…GSKS) and 272 to 313 (SRSG…SSRR).

The protein resides in the virion. This is an uncharacterized protein from Acanthamoeba polyphaga mimivirus (APMV).